Consider the following 519-residue polypeptide: S-type anion channel SLAH2 (519 aa).

Residues 1 to 31 (MNNPRSVSPLVSPANHSDLLENQRQSGSGDF) are disordered. The Cytoplasmic portion of the chain corresponds to 1 to 140 (MNNPRSVSPL…LPEDKTWPFL (140 aa)). Polar residues predominate over residues 20–29 (LENQRQSGSG). Phosphoserine occurs at positions 77 and 85. Residues 141-161 (LRFPITSYGMCLGVSSQAIMW) form a helical membrane-spanning segment. Topologically, residues 162–185 (KTLATTEAEKFLHVTQVINHVLWW) are extracellular. A helical transmembrane segment spans residues 186–206 (ISLLLLLAVSITYLFKTILFF). Residues 207-220 (EAVRREFRHPIRVN) are Cytoplasmic-facing. The helical transmembrane segment at 221-241 (FFFAPLISILFLALGIPHSII) threads the bilayer. Topologically, residues 242 to 247 (SHLPST) are extracellular. A helical transmembrane segment spans residues 248–268 (LWYFLMAPILFLEMKIYGQWM). The Cytoplasmic portion of the chain corresponds to 269–281 (SGGQRRLSKVANP). The chain crosses the membrane as a helical span at residues 282-302 (TNHLSIVGNFAGALLGASMGL). The Extracellular portion of the chain corresponds to 303-304 (KE). Residues 305–325 (GPIFFFAIGLAYYLVLFVTLY) form a helical membrane-spanning segment. Residues 326–340 (QRLPTNETLPKELHP) lie on the Cytoplasmic side of the membrane. The chain crosses the membrane as a helical span at residues 341–361 (VFFLFVAAPAVASMAWTKISA). Ser362 is a topological domain (extracellular). Residues 363 to 383 (FDLGSRLAYFISLFLYFSLVC) traverse the membrane as a helical segment. Topologically, residues 384-389 (RINLFR) are cytoplasmic. Residues 390–410 (GFKFSLAWWAYTFPMTAVASA) form a helical membrane-spanning segment. The Extracellular segment spans residues 411-424 (TIKYSDEVTGVATK). The helical transmembrane segment at 425 to 445 (ILSVVMSGAATLTVIAVLGLT) threads the bilayer. At 446 to 519 (VMHAFVQRDL…VDSSTVQNSN (74 aa)) the chain is on the cytoplasmic side. A disordered region spans residues 495 to 519 (PEDNQIDLESPPLVNVDSSTVQNSN). Residues 510-519 (VDSSTVQNSN) are compositionally biased toward polar residues.

The protein belongs to the SLAC1 S-type anion channel family. As to quaternary structure, homotrimer. Expressed in lateral root primordia and tap root tips.

It localises to the cell membrane. Slow, weak voltage-dependent S-type anion efflux channel involved in maintenance of anion homeostasis. The polypeptide is S-type anion channel SLAH2 (SLAH2) (Arabidopsis thaliana (Mouse-ear cress)).